Consider the following 231-residue polypeptide: NADH-ubiquinone oxidoreductase chain 4 (231 aa).

7 consecutive transmembrane segments (helical) span residues 1 to 21 (PIAG…YGII), 34 to 54 (MFLP…LTCL), 63 to 85 (IAYS…TPWG), 89 to 111 (AMAL…NTTY), 128 to 148 (ILPM…ATPP), 169 to 189 (TIIL…HMFL), and 211 to 231 (LLMA…ELII).

It belongs to the complex I subunit 4 family.

It is found in the mitochondrion membrane. It carries out the reaction a ubiquinone + NADH + 5 H(+)(in) = a ubiquinol + NAD(+) + 4 H(+)(out). Its function is as follows. Core subunit of the mitochondrial membrane respiratory chain NADH dehydrogenase (Complex I) that is believed to belong to the minimal assembly required for catalysis. Complex I functions in the transfer of electrons from NADH to the respiratory chain. The immediate electron acceptor for the enzyme is believed to be ubiquinone. The polypeptide is NADH-ubiquinone oxidoreductase chain 4 (MT-ND4) (Cerrophidion godmani (Porthidium godmani)).